The following is a 94-amino-acid chain: CRISPR-associated endoribonuclease Cas2 1 (94 aa).

A Mg(2+)-binding site is contributed by Asp-8.

The protein belongs to the CRISPR-associated endoribonuclease Cas2 protein family. Homodimer, forms a heterotetramer with a Cas1 homodimer. Mg(2+) serves as cofactor.

Its function is as follows. CRISPR (clustered regularly interspaced short palindromic repeat), is an adaptive immune system that provides protection against mobile genetic elements (viruses, transposable elements and conjugative plasmids). CRISPR clusters contain sequences complementary to antecedent mobile elements and target invading nucleic acids. CRISPR clusters are transcribed and processed into CRISPR RNA (crRNA). Functions as a ssRNA-specific endoribonuclease. Involved in the integration of spacer DNA into the CRISPR cassette. The sequence is that of CRISPR-associated endoribonuclease Cas2 1 from Synechocystis sp. (strain ATCC 27184 / PCC 6803 / Kazusa).